The sequence spans 93 residues: MLKPLGDRVVLKVEEREQKVGGFVIAGAGQDATKTAKVIAVGEGIRTLNGELVAPSVKADDTVLVESHAGIEVKDGEEKYLVVNETNILAIVE.

Belongs to the GroES chaperonin family. In terms of assembly, heptamer of 7 subunits arranged in a ring. Interacts with the chaperonin GroEL.

The protein resides in the cytoplasm. Together with the chaperonin GroEL, plays an essential role in assisting protein folding. The GroEL-GroES system forms a nano-cage that allows encapsulation of the non-native substrate proteins and provides a physical environment optimized to promote and accelerate protein folding. GroES binds to the apical surface of the GroEL ring, thereby capping the opening of the GroEL channel. This chain is Co-chaperonin GroES, found in Streptococcus constellatus.